Reading from the N-terminus, the 294-residue chain is NADH-cytochrome b5 reductase 1 (294 aa).

A helical transmembrane segment spans residues 13–33; it reads PHASFLGGLVVAAILGLFIFF. An FAD-binding FR-type domain is found at 44–147; sequence VEWRSFKLVD…KGPKGKFVYT (104 aa). FAD-binding positions include 127–142 and 153–185; these read SLLT…GPKG and HLVM…RLSL.

Belongs to the flavoprotein pyridine nucleotide cytochrome reductase family. Monomer. Component of the 2-(3-amino-3-carboxypropyl)histidine synthase complex composed of DPH1, DPH2, DPH3 and a NADH-dependent reductase, predominantly CBR1. FAD is required as a cofactor.

It is found in the mitochondrion outer membrane. It catalyses the reaction 2 Fe(III)-[cytochrome b5] + NADH = 2 Fe(II)-[cytochrome b5] + NAD(+) + H(+). The enzyme catalyses 2 Fe(3+)-[Dph3] + NADH = 2 Fe(2+)-[Dph3] + NAD(+) + H(+). The protein operates within protein modification; peptidyl-diphthamide biosynthesis. NADH-dependent reductase for DPH3 and cytochrome b5. Required for the first step of diphthamide biosynthesis, a post-translational modification of histidine which occurs in elongation factor 2. DPH1 and DPH2 transfer a 3-amino-3-carboxypropyl (ACP) group from S-adenosyl-L-methionine (SAM) to a histidine residue, the reaction is assisted by a reduction system comprising DPH3 and a NADH-dependent reductase, predominantly CBR1. By reducing DPH3, also involved in the formation of the tRNA wobble base modification mcm5s 2U (5-methoxycarbonylmethyl-2-thiouridine), mediated by the elongator complex. The cytochrome b5/NADH cytochrome b5 reductase electron transfer system supports the catalytic activity of several sterol biosynthetic enzymes. The sequence is that of NADH-cytochrome b5 reductase 1 (CBR1) from Cryptococcus neoformans var. neoformans serotype D (strain B-3501A) (Filobasidiella neoformans).